The sequence spans 127 residues: Glycine cleavage system H protein (127 aa).

A Lipoyl-binding domain is found at 24-105 (TALVGITDFA…YGEGWMVKMK (82 aa)). N6-lipoyllysine is present on Lys65.

Belongs to the GcvH family. In terms of assembly, the glycine cleavage system is composed of four proteins: P, T, L and H. (R)-lipoate is required as a cofactor.

The glycine cleavage system catalyzes the degradation of glycine. The H protein shuttles the methylamine group of glycine from the P protein to the T protein. This Chlorobium phaeovibrioides (strain DSM 265 / 1930) (Prosthecochloris vibrioformis (strain DSM 265)) protein is Glycine cleavage system H protein.